The chain runs to 722 residues: 1,4-alpha-glucan branching enzyme GlgB (722 aa).

The active-site Nucleophile is aspartate 401. Glutamate 454 functions as the Proton donor in the catalytic mechanism.

This sequence belongs to the glycosyl hydrolase 13 family. GlgB subfamily. As to quaternary structure, monomer.

The catalysed reaction is Transfers a segment of a (1-&gt;4)-alpha-D-glucan chain to a primary hydroxy group in a similar glucan chain.. It participates in glycan biosynthesis; glycogen biosynthesis. Catalyzes the formation of the alpha-1,6-glucosidic linkages in glycogen by scission of a 1,4-alpha-linked oligosaccharide from growing alpha-1,4-glucan chains and the subsequent attachment of the oligosaccharide to the alpha-1,6 position. The chain is 1,4-alpha-glucan branching enzyme GlgB from Rubrobacter xylanophilus (strain DSM 9941 / JCM 11954 / NBRC 16129 / PRD-1).